The following is a 131-amino-acid chain: Profilin-5 (131 aa).

Cysteines 13 and 115 form a disulfide. An Involved in PIP2 interaction motif is present at residues 81–97; sequence AVIRGKKGAGGITIKKT. T111 carries the phosphothreonine modification.

It belongs to the profilin family. As to quaternary structure, occurs in many kinds of cells as a complex with monomeric actin in a 1:1 ratio. In terms of processing, phosphorylated by MAP kinases.

It localises to the cytoplasm. The protein localises to the cytoskeleton. Binds to actin and affects the structure of the cytoskeleton. At high concentrations, profilin prevents the polymerization of actin, whereas it enhances it at low concentrations. This is Profilin-5 from Olea europaea (Common olive).